Here is a 360-residue protein sequence, read N- to C-terminus: MKPEEIERMRDEALAAFAAAGDLDALQEAKVAHTGGTSPLALANREIGALPPHAKAAAGKLVGQARGAVNKALGARQAELEAERDARVLVEEAVDVTLPYDRVPAGARHPLTTFMERVADVFVAMGYEIAEGPEVEAEWFNFDALNFTPDHPARQMQDTFFVEGPKGTEGDESGVVLRTHTSPVQARAMLDREPPVYIVCPGRVYRTDELDATHTPVFHQIELLAIDEGLTMADLKGTLDHMVQTLFGADMKTRLRPNYFPFTEPSAEMDMLCYVCKGESVGNPDRPCRTCSSEGWIELGGCGMVNPRVLTACGVDPEKYSGFAFGFGIERMLMFRHNVEDMRDMVEGDVRFTRPFGMEI.

Glutamate 264 is a Mg(2+) binding site.

The protein belongs to the class-II aminoacyl-tRNA synthetase family. Phe-tRNA synthetase alpha subunit type 1 subfamily. As to quaternary structure, tetramer of two alpha and two beta subunits. Mg(2+) serves as cofactor.

Its subcellular location is the cytoplasm. The catalysed reaction is tRNA(Phe) + L-phenylalanine + ATP = L-phenylalanyl-tRNA(Phe) + AMP + diphosphate + H(+). The protein is Phenylalanine--tRNA ligase alpha subunit of Streptomyces avermitilis (strain ATCC 31267 / DSM 46492 / JCM 5070 / NBRC 14893 / NCIMB 12804 / NRRL 8165 / MA-4680).